The sequence spans 413 residues: L-cysteine:1D-myo-inositol 2-amino-2-deoxy-alpha-D-glucopyranoside ligase (413 aa).

Cysteine 43 is a binding site for Zn(2+). Residues cysteine 43–threonine 46, threonine 58, and asparagine 81–threonine 83 contribute to the L-cysteinyl-5'-AMP site. A 'HIGH' region motif is present at residues isoleucine 45–histidine 55. Residues glutamate 187–proline 192 carry the 'ERGGDP' region motif. Tryptophan 227 contacts L-cysteinyl-5'-AMP. Cysteine 231 serves as a coordination point for Zn(2+). Glycine 249–aspartate 251 provides a ligand contact to L-cysteinyl-5'-AMP. Histidine 256 is a Zn(2+) binding site. Valine 283 contributes to the L-cysteinyl-5'-AMP binding site. A 'KMSKS' region motif is present at residues lysine 289–serine 293.

It belongs to the class-I aminoacyl-tRNA synthetase family. MshC subfamily. As to quaternary structure, monomer. Zn(2+) serves as cofactor.

The enzyme catalyses 1D-myo-inositol 2-amino-2-deoxy-alpha-D-glucopyranoside + L-cysteine + ATP = 1D-myo-inositol 2-(L-cysteinylamino)-2-deoxy-alpha-D-glucopyranoside + AMP + diphosphate + H(+). Catalyzes the ATP-dependent condensation of GlcN-Ins and L-cysteine to form L-Cys-GlcN-Ins. This Gordonia bronchialis (strain ATCC 25592 / DSM 43247 / BCRC 13721 / JCM 3198 / KCTC 3076 / NBRC 16047 / NCTC 10667) (Rhodococcus bronchialis) protein is L-cysteine:1D-myo-inositol 2-amino-2-deoxy-alpha-D-glucopyranoside ligase.